The primary structure comprises 282 residues: Kallikrein-11 (282 aa).

An N-terminal signal peptide occupies residues M1 to G50. The propeptide at E51–R53 is activation peptide. In terms of domain architecture, Peptidase S1 spans R53–K280. 6 cysteine pairs are disulfide-bonded: C60–C195, C79–C95, C167–C269, C174–C241, C206–C220, and C231–C256. The Charge relay system role is filled by H94. N131 carries N-linked (GlcNAc...) asparagine glycosylation. D142 serves as the catalytic Charge relay system. N197 and N213 each carry an N-linked (GlcNAc...) asparagine glycan. The active-site Charge relay system is the S235. N242 carries an N-linked (GlcNAc...) asparagine glycan.

Belongs to the peptidase S1 family. Kallikrein subfamily. Post-translationally, about 40% of KLK11 is inactivated by internal cleavage after Arg-188. This proteolytic inactivation may be effected by plasminogen. In terms of tissue distribution, expressed in brain, skin and prostate. Isoform 1 is expressed preferentially in brain. Isoform 2 is expressed in prostate. Present in seminal plasma at concentrations ranging from 2 to 37 microg/mL (at protein level).

The protein resides in the secreted. The protein localises to the golgi apparatus. Its function is as follows. Possible multifunctional protease. Efficiently cleaves 'bz-Phe-Arg-4-methylcoumaryl-7-amide', a kallikrein substrate, and weakly cleaves other substrates for kallikrein and trypsin. Cleaves synthetic peptides after arginine but not lysine residues. This Homo sapiens (Human) protein is Kallikrein-11 (KLK11).